Consider the following 287-residue polypeptide: Elongation factor Ts (287 aa).

Residues 80-83 are involved in Mg(2+) ion dislocation from EF-Tu; sequence TDFL.

Belongs to the EF-Ts family.

It localises to the cytoplasm. Functionally, associates with the EF-Tu.GDP complex and induces the exchange of GDP to GTP. It remains bound to the aminoacyl-tRNA.EF-Tu.GTP complex up to the GTP hydrolysis stage on the ribosome. The chain is Elongation factor Ts from Stutzerimonas stutzeri (strain A1501) (Pseudomonas stutzeri).